A 245-amino-acid chain; its full sequence is 1-(5-phosphoribosyl)-5-[(5-phosphoribosylamino)methylideneamino] imidazole-4-carboxamide isomerase (245 aa).

Asp-8 serves as the catalytic Proton acceptor. Asp-130 acts as the Proton donor in catalysis.

This sequence belongs to the HisA/HisF family.

It is found in the cytoplasm. It catalyses the reaction 1-(5-phospho-beta-D-ribosyl)-5-[(5-phospho-beta-D-ribosylamino)methylideneamino]imidazole-4-carboxamide = 5-[(5-phospho-1-deoxy-D-ribulos-1-ylimino)methylamino]-1-(5-phospho-beta-D-ribosyl)imidazole-4-carboxamide. It participates in amino-acid biosynthesis; L-histidine biosynthesis; L-histidine from 5-phospho-alpha-D-ribose 1-diphosphate: step 4/9. This is 1-(5-phosphoribosyl)-5-[(5-phosphoribosylamino)methylideneamino] imidazole-4-carboxamide isomerase from Pseudomonas aeruginosa (strain LESB58).